Reading from the N-terminus, the 964-residue chain is Activator of stress genes 1 (964 aa).

The segment at residues 21 to 47 (CDECRKKKVKCDGQQPCIHCTVYSYEC) is a DNA-binding region (zn(2)-C6 fungal-type). Residues 104–125 (ASTIPASNNPSKPRKYKTKSTR) are disordered. At Ser166 the chain carries Phosphoserine; by ATM or ATR. Ser186 carries the phosphoserine modification. 3 stretches are compositionally biased toward polar residues: residues 190-201 (PVLSSNSKNSTP), 209-225 (KSDS…DSVD), and 733-759 (NNTP…TNMS). Disordered regions lie at residues 190-225 (PVLS…DSVD), 733-764 (NNTP…ERDP), and 800-900 (NSAF…SPSY). The segment covering 800 to 896 (NSAFDFSSSK…NDFGIKIDNN (97 aa)) has biased composition (low complexity). The residue at position 963 (Ser963) is a Phosphoserine.

Belongs to the ASG1 family.

The protein localises to the nucleus. Functionally, probable transcription factor involved in the stress response. In Saccharomyces cerevisiae (strain ATCC 204508 / S288c) (Baker's yeast), this protein is Activator of stress genes 1 (ASG1).